We begin with the raw amino-acid sequence, 119 residues long: uncharacterized protein (119 aa).

The next 3 helical transmembrane spans lie at 28–48, 55–75, and 80–100; these read AWTT…HLVF, IEVV…NLAI, and PIGK…GIIV.

This sequence to M.tuberculosis Rv1342c.

The protein localises to the cell membrane. This is an uncharacterized protein from Mycobacterium leprae (strain TN).